A 241-amino-acid chain; its full sequence is RxLR effector protein SFI5 (241 aa).

The first 20 residues, 1 to 20 (MLRQARPLVVLIAVTFLVAS), serve as a signal peptide directing secretion. Positions 44-62 (RLLRTHHATIKVNADSEER) match the RxLR-dEER motif.

Belongs to the RxLR effector family.

The protein resides in the secreted. The protein localises to the host cell membrane. In terms of biological role, effector that suppresses flg22-induced post-translational MAP kinase activation in tomato but not in Arabidopsis. The perception of highly conserved pathogen- or microbe-associated molecular patterns (PAMPs/MAMPs), such as flg22, triggers converging signaling pathways recruiting MAP kinase cascades and inducing transcriptional re-programming, yielding a generic antimicrobial response. This Phytophthora infestans (strain T30-4) (Potato late blight agent) protein is RxLR effector protein SFI5.